Reading from the N-terminus, the 711-residue chain is MFNKVTKTFQYGQHQVTLETGEIARQASGAVLVSIEDTVVLATVVAKKDAKPGQDFFPLTVDYVEKTYAAGRIPGGFFKREGRPSEKETLTSRLIDRPIRPLFPEGYLNEVQIIIHVMSVNPEIDPDIAAMIGASAALSVAGIPFAGPVGAARVGYIDGQYVLNPTTSQLAKSDLDLVVAGTEIAVLMVESEAKQLSEEVMLGAVVFGHEQMKAVIDAIHDLVRDGGKPEVQWSPAPKNEALISRVAHFAEAKLRAAYQTKDKQARTTKLKDAFAEVNNELAAEAASIGAAAPDTAEVGNILFDLEAKIVRSQILEGEPRIDGRDTRTVRPITIRTGVLPRTHGSALFTRGETQALVIATLGTARDEQKIDALMGEYSDRFMLHYNMPPFATGETGRVGTPKRREIGHGRLAKRALVAALPAPEDFSYSVRLVSEITESNGSSSMASVCGGCLALMDAGVPMQSHVAGIAMGLIKEGSKFAVLTDILGDEDHLGDMDFKVAGTANGITALQMDIKIQGITKEIMQVALAQAKEGRVHILGEMEKAVPSGTTGELSDFAPRLITIKINPEKIRDVIGKGGAVIRALTEETGTQIDISDEGVVTIASVDAAAGQEAKRRIEELTASVEVGKIYEGTVLKLLDFGAIVQVMPGKDGLLHISQIANERVNAVADYLQEGQQVRVKVLETDDRGRLKLSMKAAVAEENPEPAAAQE.

Residues Asp-491 and Asp-497 each coordinate Mg(2+). The region spanning 559 to 618 (PRLITIKINPEKIRDVIGKGGAVIRALTEETGTQIDISDEGVVTIASVDAAAGQEAKRRI) is the KH domain. Positions 628–696 (GKIYEGTVLK…DRGRLKLSMK (69 aa)) constitute an S1 motif domain.

It belongs to the polyribonucleotide nucleotidyltransferase family. The cofactor is Mg(2+).

It is found in the cytoplasm. It carries out the reaction RNA(n+1) + phosphate = RNA(n) + a ribonucleoside 5'-diphosphate. Functionally, involved in mRNA degradation. Catalyzes the phosphorolysis of single-stranded polyribonucleotides processively in the 3'- to 5'-direction. In Janthinobacterium sp. (strain Marseille) (Minibacterium massiliensis), this protein is Polyribonucleotide nucleotidyltransferase.